Consider the following 142-residue polypeptide: UPF0102 protein Bcep18194_A3391 (142 aa).

The disordered stretch occupies residues 1–27 (MCHAAPARPGDGRGLPRAGDNFSGAAR).

The protein belongs to the UPF0102 family.

This Burkholderia lata (strain ATCC 17760 / DSM 23089 / LMG 22485 / NCIMB 9086 / R18194 / 383) protein is UPF0102 protein Bcep18194_A3391.